The following is a 342-amino-acid chain: Tetraacyldisaccharide 4'-kinase (342 aa).

ATP is bound at residue 68–75 (TVGGTGKT).

This sequence belongs to the LpxK family.

It carries out the reaction a lipid A disaccharide + ATP = a lipid IVA + ADP + H(+). It functions in the pathway glycolipid biosynthesis; lipid IV(A) biosynthesis; lipid IV(A) from (3R)-3-hydroxytetradecanoyl-[acyl-carrier-protein] and UDP-N-acetyl-alpha-D-glucosamine: step 6/6. In terms of biological role, transfers the gamma-phosphate of ATP to the 4'-position of a tetraacyldisaccharide 1-phosphate intermediate (termed DS-1-P) to form tetraacyldisaccharide 1,4'-bis-phosphate (lipid IVA). The sequence is that of Tetraacyldisaccharide 4'-kinase from Burkholderia cenocepacia (strain HI2424).